A 311-amino-acid polypeptide reads, in one-letter code: Manganese-dependent ADP-ribose/CDP-alcohol diphosphatase (311 aa).

Positions 17, 19, 64, 99, 218, 255, and 257 each coordinate Zn(2+).

It belongs to the ADPRibase-Mn family. As to quaternary structure, monomer. Mg(2+) is required as a cofactor.

The catalysed reaction is CDP-choline + H2O = phosphocholine + CMP + 2 H(+). It carries out the reaction ADP-D-ribose + H2O = D-ribose 5-phosphate + AMP + 2 H(+). The enzyme catalyses CDP-glycerol + H2O = sn-glycerol 3-phosphate + CMP + 2 H(+). Its function is as follows. Hydrolyzes ADP-ribose, IDP-ribose, CDP-glycerol, CDP-choline and CDP-ethanolamine, but not other non-reducing ADP-sugars or CDP-glucose. This Arabidopsis thaliana (Mouse-ear cress) protein is Manganese-dependent ADP-ribose/CDP-alcohol diphosphatase.